The chain runs to 325 residues: DNA-directed RNA polymerase subunit alpha (325 aa).

Residues 1–231 (MQTSLLKPKI…DQLSVFAALE (231 aa)) form an alpha N-terminal domain (alpha-NTD) region. The alpha C-terminal domain (alpha-CTD) stretch occupies residues 246-325 (IDPILLRPVD…ENWPPAGLDK (80 aa)).

It belongs to the RNA polymerase alpha chain family. As to quaternary structure, homodimer. The RNAP catalytic core consists of 2 alpha, 1 beta, 1 beta' and 1 omega subunit. When a sigma factor is associated with the core the holoenzyme is formed, which can initiate transcription.

It catalyses the reaction RNA(n) + a ribonucleoside 5'-triphosphate = RNA(n+1) + diphosphate. In terms of biological role, DNA-dependent RNA polymerase catalyzes the transcription of DNA into RNA using the four ribonucleoside triphosphates as substrates. The polypeptide is DNA-directed RNA polymerase subunit alpha (Paraburkholderia phytofirmans (strain DSM 17436 / LMG 22146 / PsJN) (Burkholderia phytofirmans)).